Reading from the N-terminus, the 253-residue chain is Major prion protein (253 aa).

Residues 1 to 22 (MANLGCWMLVLFVATWSDLGLC) form the signal peptide. The interval 23-230 (KKRPKPGGWN…ESQAYYQRGS (208 aa)) is interaction with GRB2, ERI3 and SYN1. The interval 26–108 (PKPGGWNTGG…WHKPSKPKTS (83 aa)) is disordered. 5 consecutive repeat copies span residues 51–59 (PQGGGGWGQ), 60–67 (PHGGGWGQ), 68–75 (PHGGGWGQ), 76–83 (PHGGGWGQ), and 84–91 (PHGGGWGQ). The segment at 51–91 (PQGGGGWGQPHGGGWGQPHGGGWGQPHGGGWGQPHGGGWGQ) is 5 X 8 AA tandem repeats of P-H-G-G-G-W-G-Q. Gly residues predominate over residues 52 to 95 (QGGGGWGQPHGGGWGQPHGGGWGQPHGGGWGQPHGGGWGQGGGT). 12 residues coordinate Cu(2+): His-61, Gly-62, Gly-63, His-69, Gly-70, Gly-71, His-77, Gly-78, Gly-79, His-85, Gly-86, and Gly-87. Positions 98 to 108 (QWHKPSKPKTS) are enriched in basic residues. A disulfide bridge links Cys-179 with Cys-214. Residues Asn-181 and Asn-197 are each glycosylated (N-linked (GlcNAc...) asparagine). A lipid anchor (GPI-anchor amidated serine) is attached at Ser-230. A propeptide spans 231-253 (SMVLFSSPPVILLISFLIFLIVG) (removed in mature form).

This sequence belongs to the prion family. In terms of assembly, monomer and homodimer. Has a tendency to aggregate into amyloid fibrils containing a cross-beta spine, formed by a steric zipper of superposed beta-strands. Soluble oligomers may represent an intermediate stage on the path to fibril formation. Copper binding may promote oligomerization. Interacts with GRB2, APP, ERI3/PRNPIP and SYN1. Mislocalized cytosolically exposed PrP interacts with MGRN1; this interaction alters MGRN1 subcellular location and causes lysosomal enlargement. Interacts with KIAA1191.

It is found in the cell membrane. Its subcellular location is the golgi apparatus. Its primary physiological function is unclear. Has cytoprotective activity against internal or environmental stresses. May play a role in neuronal development and synaptic plasticity. May be required for neuronal myelin sheath maintenance. May play a role in iron uptake and iron homeostasis. Soluble oligomers are toxic to cultured neuroblastoma cells and induce apoptosis (in vitro). Association with GPC1 (via its heparan sulfate chains) targets PRNP to lipid rafts. Also provides Cu(2+) or Zn(2+) for the ascorbate-mediated GPC1 deaminase degradation of its heparan sulfate side chains. This is Major prion protein (PRNP) from Macaca fascicularis (Crab-eating macaque).